The sequence spans 302 residues: Urease accessory protein UreD 2 (302 aa).

The protein belongs to the UreD family. UreD, UreF and UreG form a complex that acts as a GTP-hydrolysis-dependent molecular chaperone, activating the urease apoprotein by helping to assemble the nickel containing metallocenter of UreC. The UreE protein probably delivers the nickel.

Its subcellular location is the cytoplasm. Required for maturation of urease via the functional incorporation of the urease nickel metallocenter. This Brucella canis (strain ATCC 23365 / NCTC 10854 / RM-666) protein is Urease accessory protein UreD 2.